A 108-amino-acid polypeptide reads, in one-letter code: Large ribosomal subunit protein eL32 (108 aa).

Residues Arg-21–Met-30 show a composition bias toward basic residues. Positions Arg-21–Gly-44 are disordered.

Belongs to the eukaryotic ribosomal protein eL32 family.

The protein is Large ribosomal subunit protein eL32 (rpl32e) of Methanothermobacter thermautotrophicus (strain ATCC 29096 / DSM 1053 / JCM 10044 / NBRC 100330 / Delta H) (Methanobacterium thermoautotrophicum).